Here is a 399-residue protein sequence, read N- to C-terminus: DNA polymerase IV (399 aa).

The UmuC domain occupies I5 to G187. The Mg(2+) site is built by D9 and D105. The active site involves E106.

This sequence belongs to the DNA polymerase type-Y family. In terms of assembly, monomer. Requires Mg(2+) as cofactor.

It localises to the cytoplasm. The catalysed reaction is DNA(n) + a 2'-deoxyribonucleoside 5'-triphosphate = DNA(n+1) + diphosphate. Functionally, poorly processive, error-prone DNA polymerase involved in untargeted mutagenesis. Copies undamaged DNA at stalled replication forks, which arise in vivo from mismatched or misaligned primer ends. These misaligned primers can be extended by PolIV. Exhibits no 3'-5' exonuclease (proofreading) activity. May be involved in translesional synthesis, in conjunction with the beta clamp from PolIII. The polypeptide is DNA polymerase IV (Acetivibrio thermocellus (strain ATCC 27405 / DSM 1237 / JCM 9322 / NBRC 103400 / NCIMB 10682 / NRRL B-4536 / VPI 7372) (Clostridium thermocellum)).